A 232-amino-acid chain; its full sequence is EEF1A lysine methyltransferase 3 (232 aa).

Residues Trp57, 83–85 (GAG), Asp104, Trp133, and Ala150 contribute to the S-adenosyl-L-methionine site.

Belongs to the methyltransferase superfamily. METTL21 family. Interacts with members of the heat shock protein 70 and 90 families and of the TCP-1 chaperonin family, as well as with HSPD1, STIP1 and tubulin; at least some of these proteins may be methylation substrates.

The protein resides in the cytoplasm. It is found in the cytoskeleton. It localises to the microtubule organizing center. The protein localises to the centrosome. The enzyme catalyses L-lysyl-[protein] + 3 S-adenosyl-L-methionine = N(6),N(6),N(6)-trimethyl-L-lysyl-[protein] + 3 S-adenosyl-L-homocysteine + 3 H(+). The catalysed reaction is L-lysyl-[protein] + S-adenosyl-L-methionine = N(6)-methyl-L-lysyl-[protein] + S-adenosyl-L-homocysteine + H(+). It catalyses the reaction N(6)-methyl-L-lysyl-[protein] + S-adenosyl-L-methionine = N(6),N(6)-dimethyl-L-lysyl-[protein] + S-adenosyl-L-homocysteine + H(+). It carries out the reaction N(6),N(6)-dimethyl-L-lysyl-[protein] + S-adenosyl-L-methionine = N(6),N(6),N(6)-trimethyl-L-lysyl-[protein] + S-adenosyl-L-homocysteine + H(+). Its function is as follows. Protein-lysine methyltransferase that selectively mono-, di- and trimethylates 'Lys-165' of the translation elongation factors EEF1A1 and EEF1A2 in an aminoacyl-tRNA and GTP-dependent manner. EEF1A1 methylation by EEF1AKMT3 is dynamic as well as inducible by stress conditions, such as ER-stress, and plays a regulatory role on mRNA translation. This is EEF1A lysine methyltransferase 3 from Mus musculus (Mouse).